A 154-amino-acid chain; its full sequence is Myoglobin (154 aa).

The 147-residue stretch at 2–148 folds into the Globin domain; that stretch reads GLSDGEWQLV…FRNDMATKYK (147 aa). Serine 4 bears the Phosphoserine mark. Histidine 65 provides a ligand contact to nitrite. Histidine 65 serves as a coordination point for O2. Heme b is bound at residue histidine 94.

It belongs to the globin family. Monomeric.

It localises to the cytoplasm. Its subcellular location is the sarcoplasm. The catalysed reaction is Fe(III)-heme b-[protein] + nitric oxide + H2O = Fe(II)-heme b-[protein] + nitrite + 2 H(+). It catalyses the reaction H2O2 + AH2 = A + 2 H2O. Monomeric heme protein which primary function is to store oxygen and facilitate its diffusion within muscle tissues. Reversibly binds oxygen through a pentacoordinated heme iron and enables its timely and efficient release as needed during periods of heightened demand. Depending on the oxidative conditions of tissues and cells, and in addition to its ability to bind oxygen, it also has a nitrite reductase activity whereby it regulates the production of bioactive nitric oxide. Under stress conditions, like hypoxia and anoxia, it also protects cells against reactive oxygen species thanks to its pseudoperoxidase activity. The sequence is that of Myoglobin (MB) from Tachyglossus aculeatus aculeatus (Southeast Australian short-beaked echidna).